We begin with the raw amino-acid sequence, 267 residues long: 7alpha-hydroxysteroid dehydrogenase (267 aa).

Residues 13-18 (SATRGI), arginine 38, 63-64 (DA), and asparagine 90 contribute to the NADP(+) site. The cholate site is built by serine 145 and tyrosine 158. Residues tyrosine 158, lysine 162, and 191 to 195 (IATDA) each bind NADP(+). Tyrosine 158 acts as the Proton acceptor in catalysis.

The protein belongs to the short-chain dehydrogenases/reductases (SDR) family. As to quaternary structure, homotetramer.

The enzyme catalyses cholate + NADP(+) = 3alpha,12alpha-dihydroxy-7-oxo-5beta-cholanate + NADPH + H(+). It carries out the reaction chenodeoxycholate + NADP(+) = 7-oxolithocholate + NADPH + H(+). In terms of biological role, 7alpha-hydroxysteroid dehydrogenase that catalyzes the NADP(+)-dependent oxidation of the 7alpha-hydroxy group of 7alpha-hydroxysteroids, such as the major human bile acids cholate and chenodeoxycholate, to the corresponding 7-oxosteroids. Is thus liley involved in the metabolism of primary bile acids. This Paraclostridium sordellii (Clostridium sordellii) protein is 7alpha-hydroxysteroid dehydrogenase.